A 257-amino-acid chain; its full sequence is Imidazole glycerol phosphate synthase subunit HisF (257 aa).

Active-site residues include aspartate 12 and aspartate 131.

This sequence belongs to the HisA/HisF family. In terms of assembly, heterodimer of HisH and HisF.

The protein resides in the cytoplasm. The catalysed reaction is 5-[(5-phospho-1-deoxy-D-ribulos-1-ylimino)methylamino]-1-(5-phospho-beta-D-ribosyl)imidazole-4-carboxamide + L-glutamine = D-erythro-1-(imidazol-4-yl)glycerol 3-phosphate + 5-amino-1-(5-phospho-beta-D-ribosyl)imidazole-4-carboxamide + L-glutamate + H(+). The protein operates within amino-acid biosynthesis; L-histidine biosynthesis; L-histidine from 5-phospho-alpha-D-ribose 1-diphosphate: step 5/9. Its function is as follows. IGPS catalyzes the conversion of PRFAR and glutamine to IGP, AICAR and glutamate. The HisF subunit catalyzes the cyclization activity that produces IGP and AICAR from PRFAR using the ammonia provided by the HisH subunit. This chain is Imidazole glycerol phosphate synthase subunit HisF, found in Rhodococcus erythropolis (strain PR4 / NBRC 100887).